The primary structure comprises 398 residues: 1-deoxy-D-xylulose 5-phosphate reductoisomerase (398 aa).

NADPH is bound by residues Thr-10, Gly-11, Ser-12, Ile-13, Gly-36, Arg-37, Asn-38, and Asn-124. Lys-125 contacts 1-deoxy-D-xylulose 5-phosphate. Glu-126 serves as a coordination point for NADPH. Residue Asp-150 participates in Mn(2+) binding. 1-deoxy-D-xylulose 5-phosphate is bound by residues Ser-151, Glu-152, Ser-186, and His-209. Position 152 (Glu-152) interacts with Mn(2+). Residue Gly-215 coordinates NADPH. 1-deoxy-D-xylulose 5-phosphate is bound by residues Ser-222, Asn-227, Lys-228, and Glu-231. Glu-231 is a Mn(2+) binding site.

It belongs to the DXR family. As to quaternary structure, homodimer. Mg(2+) is required as a cofactor. It depends on Mn(2+) as a cofactor.

It catalyses the reaction 2-C-methyl-D-erythritol 4-phosphate + NADP(+) = 1-deoxy-D-xylulose 5-phosphate + NADPH + H(+). The protein operates within isoprenoid biosynthesis; isopentenyl diphosphate biosynthesis via DXP pathway; isopentenyl diphosphate from 1-deoxy-D-xylulose 5-phosphate: step 1/6. Catalyzes the NADPH-dependent rearrangement and reduction of 1-deoxy-D-xylulose-5-phosphate (DXP) to 2-C-methyl-D-erythritol 4-phosphate (MEP). The sequence is that of 1-deoxy-D-xylulose 5-phosphate reductoisomerase from Yersinia pseudotuberculosis serotype O:1b (strain IP 31758).